The chain runs to 266 residues: Electron transfer flavoprotein subunit beta (266 aa).

Belongs to the ETF beta-subunit/FixA family. As to quaternary structure, heterodimer of an alpha and a beta subunit. The cofactor is FAD. AMP is required as a cofactor.

Its function is as follows. The electron transfer flavoprotein serves as a specific electron acceptor for other dehydrogenases. It transfers the electrons to the main respiratory chain via ETF-ubiquinone oxidoreductase (ETF dehydrogenase). The chain is Electron transfer flavoprotein subunit beta (etfB) from Mycobacterium leprae (strain TN).